A 676-amino-acid chain; its full sequence is Basic proline-rich protein (676 aa).

The first 16 residues, Met-1 to Ala-16, serve as a signal peptide directing secretion. Ser-28 and Ser-30 each carry phosphoserine. The interval Asn-29 to Gln-676 is disordered. Composition is skewed to pro residues over residues Arg-36 to Glu-50, Gly-71 to Asp-424, and Pro-442 to Gln-676. A propeptide spanning residues Ala-409–Pro-457 is cleaved from the precursor.

As to expression, acinar cells and secretory granules of the parotid gland.

It localises to the secreted. The parotid hormone stimulates dentinal fluid transport in teeth. This Sus scrofa (Pig) protein is Basic proline-rich protein.